The primary structure comprises 307 residues: Yop proteins translocation protein Q (307 aa).

This sequence belongs to the FliN/MopA/SpaO family.

Its function is as follows. Component of the Yop secretion machinery. This is Yop proteins translocation protein Q (yscQ) from Yersinia pestis.